Here is a 430-residue protein sequence, read N- to C-terminus: MPYIKTINSLEVLDSRGNPTVEVEVITLSGAKGKTLVPSGASTGEHEAVELRDSDSKRYLGKGVLKAVENVATVIEPRLQNLSVLDQALIDQTLIQLDGTPNKSKLGANAILGVSLACARAAADYLGLELYEYIAGIAPKQMPVPMMNVINGGAHASNSVDFQEFMILPTGAPSFKEALRYGAEVFHHLGKILKQKGLPTTVGDEGGYAPDLNSNKEALQIILEAIQNAGYVPGKDIFLGMDVAASEFYDRETKKYLLASENNKTFSSEELVSYYEQLINKYPILSIEDGLDQNDWDGWKLLTQKLGQKVQLVGDDLFVTNTQKIQEGIDKQIANSVLIKLNQIGTLTETLEAIEMAKKASYTVVISHRSGETEDTTIADLAVAMNTGQIKTGSCSRTDRIAKYNQLLRIEKNMSNPSYLGLKVFYNLKK.

Gln-163 serves as a coordination point for (2R)-2-phosphoglycerate. Glu-205 (proton donor) is an active-site residue. Mg(2+) is bound by residues Asp-242, Glu-288, and Asp-315. (2R)-2-phosphoglycerate is bound by residues Lys-340, Arg-369, Ser-370, and Lys-391. Lys-340 acts as the Proton acceptor in catalysis.

This sequence belongs to the enolase family. It depends on Mg(2+) as a cofactor.

It is found in the cytoplasm. Its subcellular location is the secreted. It localises to the cell surface. It catalyses the reaction (2R)-2-phosphoglycerate = phosphoenolpyruvate + H2O. It functions in the pathway carbohydrate degradation; glycolysis; pyruvate from D-glyceraldehyde 3-phosphate: step 4/5. Functionally, catalyzes the reversible conversion of 2-phosphoglycerate (2-PG) into phosphoenolpyruvate (PEP). It is essential for the degradation of carbohydrates via glycolysis. This chain is Enolase, found in Phytoplasma australiense.